Consider the following 370-residue polypeptide: D-alanine--D-alanine ligase (370 aa).

Residues 144–352 (KKIFADAGIP…YGALIERLVD (209 aa)) form the ATP-grasp domain. 177 to 232 (EEVLTYPVFVKPANLGSSVGISKATNKKELVDAMTEAFLYDRRVVVEQGVVAREIE) is an ATP binding site. Mg(2+) contacts are provided by aspartate 306, glutamate 319, and asparagine 321.

This sequence belongs to the D-alanine--D-alanine ligase family. Mg(2+) serves as cofactor. Requires Mn(2+) as cofactor.

The protein localises to the cytoplasm. The catalysed reaction is 2 D-alanine + ATP = D-alanyl-D-alanine + ADP + phosphate + H(+). It functions in the pathway cell wall biogenesis; peptidoglycan biosynthesis. Its function is as follows. Cell wall formation. This is D-alanine--D-alanine ligase from Listeria monocytogenes serovar 1/2a (strain ATCC BAA-679 / EGD-e).